A 492-amino-acid chain; its full sequence is Mitochondrial distribution and morphology protein 12 (492 aa).

The SMP-LTD domain maps to 1-492; sequence MSIDLNWETV…VYPSFWTFLV (492 aa). 3 disordered regions span residues 68–158, 199–301, and 379–434; these read DFYE…STPG, LEGH…GHPR, and AVGG…GSGN. Positions 78 to 90 are enriched in acidic residues; the sequence is VASDDSEGEEDAV. Gly residues predominate over residues 130 to 139; sequence SPGGPGGPGM. Over residues 246 to 257 the composition is skewed to low complexity; sequence LNPNSLAPPSSS. Over residues 270-285 the composition is skewed to polar residues; the sequence is TTPAPGSATALSGSNE. Positions 387–400 are enriched in low complexity; the sequence is GLSSPGEGPSQAQG. Positions 401–415 are enriched in gly residues; it reads QGQGQGQGQGQGQTP. Positions 416-428 are enriched in low complexity; sequence GAGQQKQQKKQAG.

Belongs to the MDM12 family. In terms of assembly, component of the ER-mitochondria encounter structure (ERMES) or MDM complex, composed of MMM1, MDM10, MDM12 and MDM34. An MMM1 homodimer associates with one molecule of MDM12 on each side in a pairwise head-to-tail manner, and the SMP-LTD domains of MMM1 and MDM12 generate a continuous hydrophobic tunnel for phospholipid trafficking.

It is found in the mitochondrion outer membrane. Its subcellular location is the endoplasmic reticulum membrane. Functionally, component of the ERMES/MDM complex, which serves as a molecular tether to connect the endoplasmic reticulum (ER) and mitochondria. Components of this complex are involved in the control of mitochondrial shape and protein biogenesis, and function in nonvesicular lipid trafficking between the ER and mitochondria. MDM12 is required for the interaction of the ER-resident membrane protein MMM1 and the outer mitochondrial membrane-resident beta-barrel protein MDM10. The MDM12-MMM1 subcomplex functions in the major beta-barrel assembly pathway that is responsible for biogenesis of all mitochondrial outer membrane beta-barrel proteins, and acts in a late step after the SAM complex. The MDM10-MDM12-MMM1 subcomplex further acts in the TOM40-specific pathway after the action of the MDM12-MMM1 complex. Essential for establishing and maintaining the structure of mitochondria and maintenance of mtDNA nucleoids. This Chaetomium globosum (strain ATCC 6205 / CBS 148.51 / DSM 1962 / NBRC 6347 / NRRL 1970) (Soil fungus) protein is Mitochondrial distribution and morphology protein 12.